We begin with the raw amino-acid sequence, 348 residues long: Nicotinate-nucleotide pyrophosphorylase [carboxylating], chloroplastic (348 aa).

The N-terminal 41 residues, 1–41, are a transit peptide targeting the chloroplast; sequence MISVSRFLSPQFYAIPRSFVKMSASATQTAGEVSMGIKPPS. Residues R139, 170–172, R194, K204, E237, D264, 296–298, and 317–319 each bind substrate; these read TRK, SGN, and SGA.

This sequence belongs to the NadC/ModD family.

The protein localises to the plastid. It is found in the chloroplast. The enzyme catalyses nicotinate beta-D-ribonucleotide + CO2 + diphosphate = quinolinate + 5-phospho-alpha-D-ribose 1-diphosphate + 2 H(+). It functions in the pathway cofactor biosynthesis; NAD(+) biosynthesis; nicotinate D-ribonucleotide from quinolinate: step 1/1. Functionally, involved in the biosynthesis of NAD(+). Catalyzes the conversion of quinolate to nicotinate to nicotinate beta-D-ribonucleotide. The sequence is that of Nicotinate-nucleotide pyrophosphorylase [carboxylating], chloroplastic from Arabidopsis thaliana (Mouse-ear cress).